A 190-amino-acid polypeptide reads, in one-letter code: UPF0340 protein BC_5317 (190 aa).

The protein belongs to the UPF0340 family.

The chain is UPF0340 protein BC_5317 from Bacillus cereus (strain ATCC 14579 / DSM 31 / CCUG 7414 / JCM 2152 / NBRC 15305 / NCIMB 9373 / NCTC 2599 / NRRL B-3711).